We begin with the raw amino-acid sequence, 209 residues long: tRNA (guanine-N(7)-)-methyltransferase (209 aa).

Asp35, Glu60, Asn87, and Asp113 together coordinate S-adenosyl-L-methionine. Residue Asp113 is part of the active site. Substrate contacts are provided by Lys117 and Asp149.

This sequence belongs to the class I-like SAM-binding methyltransferase superfamily. TrmB family.

The enzyme catalyses guanosine(46) in tRNA + S-adenosyl-L-methionine = N(7)-methylguanosine(46) in tRNA + S-adenosyl-L-homocysteine. Its pathway is tRNA modification; N(7)-methylguanine-tRNA biosynthesis. Its function is as follows. Catalyzes the formation of N(7)-methylguanine at position 46 (m7G46) in tRNA. This Prochlorococcus marinus (strain MIT 9215) protein is tRNA (guanine-N(7)-)-methyltransferase.